A 565-amino-acid chain; its full sequence is Zinc finger protein 143 (565 aa).

7 C2H2-type zinc fingers span residues 230-254, 260-284, 290-314, 320-344, 350-374, 380-404, and 410-433; these read FRCD…ERSH, YQCD…VRTH, YRCS…VRTH, FKCP…IRTH, YYCS…VRIH, YVCT…HVVH, and YNCN…RTAH.

Belongs to the GLI C2H2-type zinc-finger protein family.

Its subcellular location is the nucleus. In terms of biological role, transcriptional activator. Activates the gene for selenocysteine tRNA (tRNAsec). Binds to the activator element (AE) motif of the selenocysteine tRNA gene promoter. The protein is Zinc finger protein 143 (znf143) of Xenopus laevis (African clawed frog).